Here is a 137-residue protein sequence, read N- to C-terminus: Acidic phospholipase A2 CC-PLA2-1 (137 aa).

A signal peptide spans 1-16; the sequence is MRTLWIVAVWLMGVEG. Cystine bridges form between C42–C130, C44–C60, C59–C110, C65–C137, C66–C103, C73–C96, and C90–C101. 3 residues coordinate Ca(2+): Y43, G45, and G47. Residue H63 is part of the active site. D64 provides a ligand contact to Ca(2+). Residue D104 is part of the active site.

The protein belongs to the phospholipase A2 family. Group II subfamily. D49 sub-subfamily. Ca(2+) is required as a cofactor. Post-translationally, glycosylated (2.5%). Expressed by the venom gland.

Its subcellular location is the secreted. It carries out the reaction a 1,2-diacyl-sn-glycero-3-phosphocholine + H2O = a 1-acyl-sn-glycero-3-phosphocholine + a fatty acid + H(+). Its function is as follows. Snake venom phospholipase A2 (PLA2) that inhibits blood coagulation and platelet aggregation induced by ADP and arachidonic acid. Inhibits tumor cell adhesion and migration in a dose-dependent manner. Abolishes the attachment of human brain microvascular endothelial cells (HBMEC) to fibrinogen (IC(50)=0.12 uM) and dramatically reduces its adhesion to fibronectin (IC(50)=0.12 uM), whereas no effect is observed on type I collagen, vitronectin or laminin 1. Also blocks the cell migration toward fibronectin and fibrinogen. These effects are not dependent of the catalytic activity, but are mediated by alpha-5/beta-1 (ITGA5/ITGB1) and alpha-v-containing (ITGAV) integrins. Also shows anti-angiogenic activity in chicken chorioallantoix membrane assay. Has a relatively high enzymatic activity. PLA2 catalyzes the calcium-dependent hydrolysis of the 2-acyl groups in 3-sn-phosphoglycerides. The chain is Acidic phospholipase A2 CC-PLA2-1 from Cerastes cerastes (Horned desert viper).